The primary structure comprises 193 residues: Mesogenin-1 (193 aa).

The segment at 34-59 (GPFELNQASPSQSLSPAPSLESYSSS) is disordered. Residues 40–59 (QASPSQSLSPAPSLESYSSS) show a composition bias toward low complexity. The 55-residue stretch at 124–178 (QRRRKASEREKLRMRTLADALHTLRNYLPPVYSQRGQPLTKIQTLKYTIKYIGEL) folds into the bHLH domain.

The protein resides in the nucleus. Involved in specifying the paraxial, but not dorsal, mesoderm. May regulate the expression of T-box transcription factors required for mesoderm formation and differentiation. In Homo sapiens (Human), this protein is Mesogenin-1 (MSGN1).